The following is a 152-amino-acid chain: Superoxide dismutase [Cu-Zn] (152 aa).

Cys-7 carries S-palmitoyl cysteine lipidation. Residues His-47, His-49, and His-64 each contribute to the Cu cation site. A disulfide bridge connects residues Cys-58 and Cys-146. His-64, His-72, His-81, and Asp-84 together coordinate Zn(2+). His-120 is a binding site for Cu cation.

This sequence belongs to the Cu-Zn superoxide dismutase family. Homodimer. The cofactor is Cu cation. Requires Zn(2+) as cofactor.

Its subcellular location is the cytoplasm. It is found in the nucleus. It catalyses the reaction 2 superoxide + 2 H(+) = H2O2 + O2. In terms of biological role, destroys radicals which are normally produced within the cells and which are toxic to biological systems. The chain is Superoxide dismutase [Cu-Zn] (sod1) from Xiphias gladius (Swordfish).